The following is a 381-amino-acid chain: O-antigen chain mannosyltransferase B (381 aa).

This sequence belongs to the glycosyltransferase group 1 family. Glycosyltransferase 4 subfamily.

The enzyme catalyses alpha-D-mannosyl-(1-&gt;3)-N-acetyl-alpha-D-glucosaminyl-di-trans,octa-cis-undecaprenyl diphosphate + 2 GDP-alpha-D-mannose = alpha-D-mannosyl-(1-&gt;3)-alpha-D-mannosyl-(1-&gt;3)-alpha-D-mannosyl-(1-&gt;3)-N-acetyl-alpha-D-glucosaminyl-di-trans,octa-cis-undecaprenyl diphosphate + 2 GDP + 2 H(+). The protein operates within bacterial outer membrane biogenesis; LPS O-antigen biosynthesis. Mannosyltransferase involved in the biosynthesis of the repeat unit of the lipopolysaccharide (LPS) O-antigen region. Catalyzes the transfer of two alpha-(1-&gt;3)-linked mannose residues to the product of the WbdC enzyme during the synthesis of the adapter region. This Escherichia coli protein is O-antigen chain mannosyltransferase B.